Here is a 78-residue protein sequence, read N- to C-terminus: uncharacterized protein (78 aa).

This is an uncharacterized protein from Treponema pallidum (strain Nichols).